The sequence spans 379 residues: MKSTKILILGAGPAGFSAAKAALGKCDDITMINSEKYLPYYRPRLNEIIAKNKSIDDILIKKNDWYEKNNIKVITSEFATSIDPNNKLVTLKSGEKIKYEKLIIASGSIANKIKVPHADEIFSLYSYDDALKIKDECKNKGKAFIIGGGILGIELAQAIIDSGTPASIGIILEYPLERQLDRDGGLFLKDKLDRLGIKIYTNSNFEEMGDLIRSSCVITAVGVKPNLDFIKDTEIASKRGILVNDHMETSIKDIYACGDVAEFYGKNPGLINIANKQGEVAGLNACGEDASYSEIIPSPILKVSGISIISCGDIENNKPSKVFRSTQEDKYIVCMLKENKIDAAAVIGDVSLGTKLKKAIDSSKSFDNISSLDAILNNL.

2 cysteine pairs are disulfide-bonded: C26–C286 and C137–C216. Residues 33 to 35, R42, A79, and Y125 contribute to the FAD site; that span reads NSE. D259 is a binding site for FAD.

It belongs to the FAD-dependent oxidoreductase family. In terms of assembly, monomer. The cofactor is FAD.

The enzyme catalyses 2 reduced [rubredoxin] + NAD(+) + H(+) = 2 oxidized [rubredoxin] + NADH. Functionally, catalyzes the NADH-dependent reduction of rubredoxin (Rd). NADPH is a very poor electron donor compared to NADH. Functions as an intermediate component in the electron transfer chain: NADH-&gt;NROR-&gt;Rd-&gt;FprA1/2. Also functions as an intermediate component in the electron transfer chains from NADH to revRbr and Dfx. Therefore, is a key electron carrier in an efficient multienzyme complex that can scavenge O(2) and reactive oxygen species (ROS), and thus plays an important role in the oxidative stress defense system in C.acetobutylicum, an obligate anaerobic bacterium. The chain is NADH-rubredoxin oxidoreductase (nroR) from Clostridium acetobutylicum (strain ATCC 824 / DSM 792 / JCM 1419 / IAM 19013 / LMG 5710 / NBRC 13948 / NRRL B-527 / VKM B-1787 / 2291 / W).